We begin with the raw amino-acid sequence, 444 residues long: 23S rRNA (uracil(1939)-C(5))-methyltransferase RlmD (444 aa).

The region spanning 5–67 (RNRFDRTPFQ…RHFDEAKTVE (63 aa)) is the TRAM domain. C80, C86, C89, and C168 together coordinate [4Fe-4S] cluster. Q276, F305, N310, E326, D353, and D374 together coordinate S-adenosyl-L-methionine. C400 acts as the Nucleophile in catalysis.

It belongs to the class I-like SAM-binding methyltransferase superfamily. RNA M5U methyltransferase family. RlmD subfamily.

It catalyses the reaction uridine(1939) in 23S rRNA + S-adenosyl-L-methionine = 5-methyluridine(1939) in 23S rRNA + S-adenosyl-L-homocysteine + H(+). Catalyzes the formation of 5-methyl-uridine at position 1939 (m5U1939) in 23S rRNA. This is 23S rRNA (uracil(1939)-C(5))-methyltransferase RlmD from Xanthomonas oryzae pv. oryzae (strain MAFF 311018).